Reading from the N-terminus, the 101-residue chain is NAD(P)H-quinone oxidoreductase subunit 4L, chloroplastic (101 aa).

A run of 3 helical transmembrane segments spans residues 2–22 (MFEY…YGLI), 32–52 (MCLE…SDLF), and 61–81 (IFSI…PAIV).

The protein belongs to the complex I subunit 4L family. In terms of assembly, NDH is composed of at least 16 different subunits, 5 of which are encoded in the nucleus.

The protein resides in the plastid. Its subcellular location is the chloroplast thylakoid membrane. It carries out the reaction a plastoquinone + NADH + (n+1) H(+)(in) = a plastoquinol + NAD(+) + n H(+)(out). It catalyses the reaction a plastoquinone + NADPH + (n+1) H(+)(in) = a plastoquinol + NADP(+) + n H(+)(out). In terms of biological role, NDH shuttles electrons from NAD(P)H:plastoquinone, via FMN and iron-sulfur (Fe-S) centers, to quinones in the photosynthetic chain and possibly in a chloroplast respiratory chain. The immediate electron acceptor for the enzyme in this species is believed to be plastoquinone. Couples the redox reaction to proton translocation, and thus conserves the redox energy in a proton gradient. This is NAD(P)H-quinone oxidoreductase subunit 4L, chloroplastic from Amborella trichopoda.